The primary structure comprises 131 residues: Small ribosomal subunit protein uS9 (131 aa).

Belongs to the universal ribosomal protein uS9 family.

The sequence is that of Small ribosomal subunit protein uS9 from Actinobacillus pleuropneumoniae serotype 5b (strain L20).